Consider the following 636-residue polypeptide: 1-deoxy-D-xylulose-5-phosphate synthase (636 aa).

Thiamine diphosphate is bound by residues His74 and Gly115–Ala117. Asp146 serves as a coordination point for Mg(2+). Residues Gly147–Ala148, Asn175, Tyr285, and Glu368 each bind thiamine diphosphate. Asn175 is a Mg(2+) binding site.

Belongs to the transketolase family. DXPS subfamily. As to quaternary structure, homodimer. Requires Mg(2+) as cofactor. Thiamine diphosphate is required as a cofactor.

It catalyses the reaction D-glyceraldehyde 3-phosphate + pyruvate + H(+) = 1-deoxy-D-xylulose 5-phosphate + CO2. Its pathway is metabolic intermediate biosynthesis; 1-deoxy-D-xylulose 5-phosphate biosynthesis; 1-deoxy-D-xylulose 5-phosphate from D-glyceraldehyde 3-phosphate and pyruvate: step 1/1. Its function is as follows. Catalyzes the acyloin condensation reaction between C atoms 2 and 3 of pyruvate and glyceraldehyde 3-phosphate to yield 1-deoxy-D-xylulose-5-phosphate (DXP). The sequence is that of 1-deoxy-D-xylulose-5-phosphate synthase from Anaeromyxobacter dehalogenans (strain 2CP-C).